A 229-amino-acid polypeptide reads, in one-letter code: Ribonuclease 3 (229 aa).

In terms of domain architecture, RNase III spans 4–133 (WEELQESVGF…FIGALYLDNG (130 aa)). Glu-46 is a binding site for Mg(2+). Asp-50 is an active-site residue. Mg(2+)-binding residues include Asp-119 and Glu-122. Residue Glu-122 is part of the active site. A DRBM domain is found at 159–228 (DYKTQLQEIV…AQFAINQLTH (70 aa)).

The protein belongs to the ribonuclease III family. Homodimer. Mg(2+) serves as cofactor.

Its subcellular location is the cytoplasm. It catalyses the reaction Endonucleolytic cleavage to 5'-phosphomonoester.. In terms of biological role, digests double-stranded RNA. Involved in the processing of primary rRNA transcript to yield the immediate precursors to the large and small rRNAs (23S and 16S). Processes some mRNAs, and tRNAs when they are encoded in the rRNA operon. Processes pre-crRNA and tracrRNA of type II CRISPR loci if present in the organism. The protein is Ribonuclease 3 of Listeria monocytogenes serotype 4b (strain CLIP80459).